Reading from the N-terminus, the 556-residue chain is HIRA-interacting protein 3 (556 aa).

A Phosphoserine modification is found at serine 27. A compositionally biased stretch (basic and acidic residues) spans 64-77 (DEAASREDKLDLTK). The tract at residues 64–426 (DEAASREDKL…GRRGEDHPAV (363 aa)) is disordered. The residue at position 84 (threonine 84) is a Phosphothreonine. A phosphoserine mark is found at serine 87, serine 98, serine 100, serine 125, serine 142, serine 143, serine 159, and serine 160. Positions 99–108 (ESESGSEASS) are enriched in low complexity. Positions 126–158 (PAKEENPRRASKAVEESSDEERQRDLPAQRGEE) are enriched in basic and acidic residues. Positions 168–177 (KGKTRKKPVV) are enriched in basic residues. Serine 196, serine 199, serine 223, and serine 227 each carry phosphoserine. Over residues 209 to 224 (KKVEGNKGTKSLKESE) the composition is skewed to basic and acidic residues. A compositionally biased stretch (acidic residues) spans 240-254 (EEEVEEEEKEEDEEK). Residues 260–269 (RTRSNGRRKS) show a composition bias toward basic residues. Serine 289 and serine 291 each carry phosphoserine. Over residues 304–322 (DSGRDREPPVQRKSEDRTQ) the composition is skewed to basic and acidic residues. Residues serine 330, serine 332, serine 333, and serine 357 each carry the phosphoserine modification. The residue at position 358 (threonine 358) is a Phosphothreonine. Residues serine 359, serine 363, serine 370, and serine 372 each carry the phosphoserine modification. The span at 385-396 (RSSKKSSRKGRT) shows a compositional bias: basic residues. Residues 403-527 (SDGSPEAKGG…APPGELYRRT (125 aa)) form an interaction with the histone H2A-H2B complex region. Position 471 is a phosphothreonine (threonine 471). A disordered region spans residues 502–556 (SGRPRRRTAWNPLGEAAPPGELYRRTLDSDEERPRPAPPDWSHMRGIISSDGESN). A compositionally biased stretch (basic and acidic residues) spans 523 to 536 (LYRRTLDSDEERPR). Phosphoserine occurs at positions 530, 550, 551, and 555.

As to quaternary structure, interacts (via C-terminus) with histone H2A-H2B dimers; the interaction is direct. Interacts with HIRA. Interacts with CK2. Post-translationally, phosphorylated by CK2. As to expression, widely expressed. Isoform 1 is predominant in skeletal muscle. Isoform 2 is predominant in liver and heart.

It is found in the nucleus. Functionally, histone chaperone that carries a H2A-H2B histone complex and facilitates its deposition onto chromatin. The polypeptide is HIRA-interacting protein 3 (HIRIP3) (Homo sapiens (Human)).